The primary structure comprises 507 residues: Putative propionyl-CoA carboxylase beta chain (507 aa).

Over residues 1-25 (MNEHMDHFYTKRKQAEEGGGREKLA) the composition is skewed to basic and acidic residues. Residues 1–30 (MNEHMDHFYTKRKQAEEGGGREKLAQQRQK) are disordered. The region spanning 1-254 (MNEHMDHFYT…NGRTTEPKPE (254 aa)) is the CoA carboxyltransferase N-terminal domain. Residues 1-501 (MNEHMDHFYT…HKTEERPKKK (501 aa)) are carboxyltransferase. Positions 256-501 (EASRPLLNRL…HKTEERPKKK (246 aa)) constitute a CoA carboxyltransferase C-terminal domain.

It belongs to the AccD/PCCB family. As to quaternary structure, probably a dodecamer composed of six biotin-containing alpha subunits and six beta subunits.

It carries out the reaction propanoyl-CoA + hydrogencarbonate + ATP = (S)-methylmalonyl-CoA + ADP + phosphate + H(+). The protein operates within metabolic intermediate metabolism; propanoyl-CoA degradation; succinyl-CoA from propanoyl-CoA: step 1/3. This chain is Putative propionyl-CoA carboxylase beta chain (yqjD), found in Bacillus subtilis (strain 168).